The sequence spans 430 residues: Endo-beta-1,4-glucanase celB (430 aa).

The signal sequence occupies residues 1-16 (MALLLSLSLLATTISA). Asn43 and Asn153 each carry an N-linked (GlcNAc...) asparagine glycan. Glu216 acts as the Nucleophile in catalysis. Residue Glu221 is the Proton donor of the active site. N-linked (GlcNAc...) asparagine glycosylation occurs at Asn395.

It belongs to the glycosyl hydrolase 7 (cellulase C) family.

It is found in the secreted. It carries out the reaction Endohydrolysis of (1-&gt;4)-beta-D-glucosidic linkages in cellulose, lichenin and cereal beta-D-glucans.. In terms of biological role, has endoglucanase activity on substrates containing beta-1,4 glycosidic bonds, like in carboxymethylcellulose (CMC), hydroxyethylcellulose (HEC) and beta-glucan. Involved in the degradation of complex natural cellulosic substrates. The chain is Endo-beta-1,4-glucanase celB (celB) from Emericella nidulans (strain FGSC A4 / ATCC 38163 / CBS 112.46 / NRRL 194 / M139) (Aspergillus nidulans).